A 115-amino-acid chain; its full sequence is Large ribosomal subunit protein bL19 (115 aa).

The protein belongs to the bacterial ribosomal protein bL19 family.

Its function is as follows. This protein is located at the 30S-50S ribosomal subunit interface and may play a role in the structure and function of the aminoacyl-tRNA binding site. This Buchnera aphidicola subsp. Schizaphis graminum (strain Sg) protein is Large ribosomal subunit protein bL19.